The primary structure comprises 1227 residues: Pre-mRNA-splicing factor ATP-dependent RNA helicase PRP16 (1227 aa).

Glycine 2 carries the N-acetylglycine modification. Serine 56 is modified (phosphoserine). Basic and acidic residues predominate over residues 60–89 (REREEKDDGEDKKKSKVSSYKDWEESKDDQ). The interval 60–320 (REREEKDDGE…ERQQWEDDQR (261 aa)) is disordered. Threonine 117 carries the phosphothreonine modification. Residues 128–201 (FWERSRQRER…SRRNEPESPR (74 aa)) are compositionally biased toward basic and acidic residues. Residues serine 199 and serine 224 each carry the phosphoserine modification. Over residues 222–239 (YGSSRRSQWESPSPTPSY) the composition is skewed to polar residues. Residues 240 to 263 (RDSERSHRLSTRDRDRSVRGKYSD) show a composition bias toward basic and acidic residues. Residue lysine 260 is modified to N6-acetyllysine. Residues 300–310 (GEEGISFDTEE) show a composition bias toward acidic residues. Basic and acidic residues predominate over residues 311 to 320 (ERQQWEDDQR). Glycyl lysine isopeptide (Lys-Gly) (interchain with G-Cter in SUMO2) cross-links involve residues lysine 482, lysine 483, and lysine 504. In terms of domain architecture, Helicase ATP-binding spans 542–705 (LTIIRDNSIV…FGNVPIFHIP (164 aa)). Residue 555–562 (GETGSGKT) coordinates ATP. The DEAH box motif lies at 652 to 655 (DEAH). Residues 727 to 902 (AVKQSLQVHL…NVVLLLKSLG (176 aa)) form the Helicase C-terminal domain. Residues 1155–1227 (GKSRQENRRR…PRRTPARFGL (73 aa)) are disordered. Basic and acidic residues-rich tracts occupy residues 1157-1169 (SRQENRRRAKEEA) and 1181-1194 (EQLRARRQEQEKRS). A Glycyl lysine isopeptide (Lys-Gly) (interchain with G-Cter in SUMO2) cross-link involves residue lysine 1166. Phosphoserine is present on serine 1194.

Belongs to the DEAD box helicase family. DEAH subfamily. PRP16 sub-subfamily. Identified in the spliceosome C complex.

The protein resides in the nucleus. The catalysed reaction is ATP + H2O = ADP + phosphate + H(+). Functionally, probable ATP-binding RNA helicase. Involved in pre-mRNA splicing as component of the spliceosome. The protein is Pre-mRNA-splicing factor ATP-dependent RNA helicase PRP16 (DHX38) of Homo sapiens (Human).